A 431-amino-acid chain; its full sequence is Mannan endo-1,4-beta-mannosidase 7 (431 aa).

The first 25 residues, Met1 to Ala25, serve as a signal peptide directing secretion. Positions 87 and 202 each coordinate substrate. The active-site Proton donor is Glu203. Tyr280 is a binding site for substrate. Catalysis depends on Glu320, which acts as the Nucleophile. Substrate is bound at residue Trp362.

Belongs to the glycosyl hydrolase 5 (cellulase A) family. Expressed in stems, flowers, siliques and seeds. Expressed in root vasculature, leaf hydathodes, anther filaments, stigma, sepal vasculature, at the base and apical parts of siliques, and replum. Expressed in the micropylar endosperm and radicle tip in early germinating seeds.

The protein resides in the secreted. It carries out the reaction Random hydrolysis of (1-&gt;4)-beta-D-mannosidic linkages in mannans, galactomannans and glucomannans.. Its function is as follows. Required for both, loosening of the micropylar endosperm, and rupture of the seed coat in germinating seeds. May participate in the hydrolysis of the mannans in the cell wall of germinating seeds. This is Mannan endo-1,4-beta-mannosidase 7 (MAN7) from Arabidopsis thaliana (Mouse-ear cress).